The sequence spans 298 residues: ATP synthase gamma chain (298 aa).

Belongs to the ATPase gamma chain family. As to quaternary structure, F-type ATPases have 2 components, CF(1) - the catalytic core - and CF(0) - the membrane proton channel. CF(1) has five subunits: alpha(3), beta(3), gamma(1), delta(1), epsilon(1). CF(0) has three main subunits: a, b and c.

The protein resides in the cell inner membrane. Functionally, produces ATP from ADP in the presence of a proton gradient across the membrane. The gamma chain is believed to be important in regulating ATPase activity and the flow of protons through the CF(0) complex. The protein is ATP synthase gamma chain of Francisella philomiragia subsp. philomiragia (strain ATCC 25017 / CCUG 19701 / FSC 153 / O#319-036).